A 277-amino-acid polypeptide reads, in one-letter code: uncharacterized protein (277 aa).

Residue Gly32–Ser39 coordinates ATP.

The protein belongs to the GLYK kinase family.

The protein resides in the cytoplasm. The protein localises to the nucleus. Has a role in meiosis. This is an uncharacterized protein from Schizosaccharomyces pombe (strain 972 / ATCC 24843) (Fission yeast).